The chain runs to 168 residues: MSKEAIAQKAAIVDEVAEQLKESVSAIVVDSRGLTVAEVTDLRKQLRDAGIKLRVIKNKVLTRAAEKAGFEGMDDVFVGPSAVAFSEEDAVAPAKILKTFADSNDNLSIKGGIIEGEVADIDTINTFATLPSREDLLAMLANEFMSPVRDVAYALKAVADKKSEEDAA.

It belongs to the universal ribosomal protein uL10 family. Part of the ribosomal stalk of the 50S ribosomal subunit. The N-terminus interacts with L11 and the large rRNA to form the base of the stalk. The C-terminus forms an elongated spine to which L12 dimers bind in a sequential fashion forming a multimeric L10(L12)X complex.

Its function is as follows. Forms part of the ribosomal stalk, playing a central role in the interaction of the ribosome with GTP-bound translation factors. The chain is Large ribosomal subunit protein uL10 from Pediococcus pentosaceus (strain ATCC 25745 / CCUG 21536 / LMG 10740 / 183-1w).